Consider the following 2188-residue polypeptide: Genome polyprotein (2188 aa).

The Cell attachment site motif lies at 772-774 (RGD). The LRAT domain maps to 795–889 (LAYLDRGFYK…DIFGTHTLSQ (95 aa)). H805 (for protein 2A H-NC) is an active-site residue. The active-site For protein 2A H-NC; Acyl-thioester intermediate is the C874. Residues 1165 to 1326 (FQELARIPNR…KAYSKSGKLN (162 aa)) form the SF3 helicase domain. Position 1193-1200 (1193-1200 (GEPGQGKS)) interacts with ATP. Position 1502 is an O-(5'-phospho-RNA)-tyrosine (Y1502). Positions 1526–1716 (APYDGQLEHI…IPFNFLKNDM (191 aa)) constitute a Peptidase C3 domain. Catalysis depends on for protease 3C activity residues H1566, D1604, and C1678. C1905 (acyl-thioester intermediate) is an active-site residue. Positions 1953–2067 (DYNYEMDYSQ…SLDREIEPER (115 aa)) constitute a RdRp catalytic domain. Residues D1959 and D2053 each contribute to the Mg(2+) site.

This sequence belongs to the picornaviruses polyprotein family. Interacts with capsid protein VP1 and capsid protein VP3 to form heterotrimeric protomers. Five protomers subsequently associate to form pentamers which serve as building blocks for the capsid. As to quaternary structure, interacts with capsid protein VP0, and capsid protein VP3 to form heterotrimeric protomers. Five protomers subsequently associate to form pentamers which serve as building blocks for the capsid. In terms of assembly, interacts with capsid protein VP0 and capsid protein VP1 to form heterotrimeric protomers. Five protomers subsequently associate to form pentamers which serve as building blocks for the capsid. Homohexamer; forms a hexameric ring structure with 6-fold symmetry characteristic of AAA+ ATPases. As to quaternary structure, homodimer. Interacts with host ACBD3. In terms of assembly, interacts with RNA-directed RNA polymerase. Interacts with Viral protein genome-linked. The cofactor is Mg(2+). In terms of processing, VPg is uridylylated by the polymerase and is covalently linked to the 5'-end of genomic RNA. This uridylylated form acts as a nucleotide-peptide primer for the polymerase. Specific enzymatic cleavages yield mature proteins. All cleavages are catalyzed by P3C.

Its subcellular location is the virion. The protein localises to the host cytoplasm. The protein resides in the host nucleus. It is found in the host nucleolus. It localises to the host cytoplasmic vesicle membrane. The enzyme catalyses RNA(n) + a ribonucleoside 5'-triphosphate = RNA(n+1) + diphosphate. The catalysed reaction is a ribonucleoside 5'-triphosphate + H2O = a ribonucleoside 5'-diphosphate + phosphate + H(+). It catalyses the reaction Selective cleavage of Gln-|-Gly bond in the poliovirus polyprotein. In other picornavirus reactions Glu may be substituted for Gln, and Ser or Thr for Gly.. Forms an icosahedral capsid of pseudo T=3 symmetry together with capsid proteins VP1 and VP3. The capsid is 300 Angstroms in diameter, composed of 60 copies of each capsid protein and enclosing the viral positive strand RNA genome. Capsid proteins interact with host alpha-V/beta-3 integrin heterodimer to provide virion attachment target cell. This attachment induces virion internalization predominantly through clathrin-mediated endocytosis. Binds packaging signals present in the viral RNA. In terms of biological role, forms an icosahedral capsid of pseudo T=3 symmetry together with capsid proteins VP0 and VP1. The capsid is 300 Angstroms in diameter, composed of 60 copies of each capsid protein and enclosing the viral positive strand RNA genome. Capsid proteins interact with host alpha-V/beta-3 integrin heterodimer to provide virion attachment target cell. This attachment induces virion internalization predominantly through clathrin-mediated endocytosis. Binds packaging signals present in the viral RNA. Functionally, forms an icosahedral capsid of pseudo T=3 symmetry together with capsid proteins VP0 and VP3. The capsid is 300 Angstroms in diameter, composed of 60 copies of each capsid protein and enclosing the viral positive strand RNA genome. Capsid proteins interact with host alpha-V/beta-3 integrin heterodimer to provide virion attachment target cell. This attachment induces virion internalization predominantly through clathrin-mediated endocytosis. Binds packaging signals present in the viral RNA. Its function is as follows. Is not a protease. Plays an essential role in the virus replication cycle by acting as a viroporin. Creates a pore in the host endoplasmic reticulum and as a consequence releases Ca2+ in the cytoplasm of infected cell. In turn, high levels of cytoplasmic calcium may trigger membrane trafficking and transport of viral ER-associated proteins to viroplasms, sites of viral genome replication. In terms of biological role, induces and associates with structural rearrangements of intracellular membranes. Displays RNA-binding, nucleotide binding and NTPase activities. May play a role in virion morphogenesis and viral RNA encapsidation by interacting with the capsid protein VP3. Functionally, localizes the viral replication complex to the surface of membranous vesicles. It inhibits host cell endoplasmic reticulum-to-Golgi apparatus transport and causes the disassembly of the Golgi complex, possibly through GBF1 interaction. This would result in depletion of MHC, trail receptors and IFN receptors at the host cell surface. Plays an essential role in viral RNA replication by recruiting ACBD3 and PI4KB at the viral replication sites, thereby allowing the formation of the rearranged membranous structures where viral replication takes place. Its function is as follows. Acts as a primer for viral RNA replication and remains covalently bound to viral genomic RNA. VPg is uridylylated prior to priming replication into VPg-pUpU. The VPg-pUpU is then used as primer on the genomic RNA poly(A) by the RNA-dependent RNA polymerase to replicate the viral genome. Following genome release from the infecting virion in the cytoplasm, the VPg-RNA linkage is probably removed by host TDP2. During the late stage of the replication cycle, host TDP2 is excluded from sites of viral RNA synthesis and encapsidation, allowing for the generation of progeny virions. Cysteine protease that generates mature viral proteins from the precursor polyprotein. In addition to its proteolytic activity, it binds to viral RNA, and thus influences viral genome replication. RNA and substrate bind cooperatively to the protease. In terms of biological role, replicates the viral genomic RNA on the surface of intracellular membranes. Covalently attaches UMP to a tyrosine of VPg, which is used to prime RNA synthesis. The positive stranded RNA genome is first replicated at virus induced membranous vesicles, creating a dsRNA genomic replication form. This dsRNA is then used as template to synthesize positive stranded RNA genomes. ss(+)RNA genomes are either translated, replicated or encapsidated. The sequence is that of Genome polyprotein from Human parechovirus 5 (strain CT86-6760) (HPeV-5).